Here is a 262-residue protein sequence, read N- to C-terminus: R3H domain-containing protein 4 (262 aa).

Disordered stretches follow at residues 1 to 27 (MVAL…PGCL) and 132 to 155 (YLED…RRED). Residues 146-155 (GRGEDRRRED) show a composition bias toward basic and acidic residues. Residues 182–245 (METLESWEER…RRQMKVSNRH (64 aa)) enclose the R3H domain.

The protein localises to the nucleus. The polypeptide is R3H domain-containing protein 4 (R3hdm4) (Mus musculus (Mouse)).